The following is a 348-amino-acid chain: uncharacterized protein (348 aa).

Residues 1–11 (MTNPQGPPNDP) are compositionally biased toward pro residues. A disordered region spans residues 1 to 83 (MTNPQGPPND…RSGRQAAHQA (83 aa)). 2 consecutive transmembrane segments (helical) span residues 111–131 (LTVF…LIGG) and 235–255 (IPIL…DGTV).

It is found in the cell membrane. This is an uncharacterized protein from Mycobacterium tuberculosis (strain CDC 1551 / Oshkosh).